The sequence spans 894 residues: Phosphoenolpyruvate carboxylase (894 aa).

Residues His-143 and Lys-556 contribute to the active site.

The protein belongs to the PEPCase type 1 family. It depends on Mg(2+) as a cofactor.

It carries out the reaction oxaloacetate + phosphate = phosphoenolpyruvate + hydrogencarbonate. In terms of biological role, forms oxaloacetate, a four-carbon dicarboxylic acid source for the tricarboxylic acid cycle. This Acinetobacter baylyi (strain ATCC 33305 / BD413 / ADP1) protein is Phosphoenolpyruvate carboxylase.